Here is a 143-residue protein sequence, read N- to C-terminus: Endoribonuclease YbeY (143 aa).

Residues His113, His117, and Asp123 each contribute to the Zn(2+) site.

This sequence belongs to the endoribonuclease YbeY family. The cofactor is Zn(2+).

It is found in the cytoplasm. Functionally, single strand-specific metallo-endoribonuclease involved in late-stage 70S ribosome quality control and in maturation of the 3' terminus of the 16S rRNA. This chain is Endoribonuclease YbeY, found in Elusimicrobium minutum (strain Pei191).